Here is a 358-residue protein sequence, read N- to C-terminus: Uroporphyrinogen decarboxylase (358 aa).

Substrate is bound by residues 29 to 33, aspartate 79, tyrosine 155, serine 210, and histidine 330; that span reads RQAGR.

It belongs to the uroporphyrinogen decarboxylase family. Homodimer.

It is found in the cytoplasm. It carries out the reaction uroporphyrinogen III + 4 H(+) = coproporphyrinogen III + 4 CO2. It participates in porphyrin-containing compound metabolism; protoporphyrin-IX biosynthesis; coproporphyrinogen-III from 5-aminolevulinate: step 4/4. In terms of biological role, catalyzes the decarboxylation of four acetate groups of uroporphyrinogen-III to yield coproporphyrinogen-III. The polypeptide is Uroporphyrinogen decarboxylase (Bordetella petrii (strain ATCC BAA-461 / DSM 12804 / CCUG 43448)).